We begin with the raw amino-acid sequence, 73 residues long: DNA-directed RNA polymerase subunit Rpo10 (73 aa).

Residues cysteine 7, cysteine 10, cysteine 44, and cysteine 45 each contribute to the Zn(2+) site.

This sequence belongs to the archaeal Rpo10/eukaryotic RPB10 RNA polymerase subunit family. In terms of assembly, part of the RNA polymerase complex. Forms an Rpo3-Rpo10-Rpo11-Rpo12 complex upon coexpression. Zn(2+) is required as a cofactor.

It localises to the cytoplasm. The catalysed reaction is RNA(n) + a ribonucleoside 5'-triphosphate = RNA(n+1) + diphosphate. In terms of biological role, DNA-dependent RNA polymerase (RNAP) catalyzes the transcription of DNA into RNA using the four ribonucleoside triphosphates as substrates. This is DNA-directed RNA polymerase subunit Rpo10 from Methanocaldococcus jannaschii (strain ATCC 43067 / DSM 2661 / JAL-1 / JCM 10045 / NBRC 100440) (Methanococcus jannaschii).